The chain runs to 102 residues: Large ribosomal subunit protein bL36m (102 aa).

Belongs to the bacterial ribosomal protein bL36 family. Component of the mitochondrial ribosome large subunit (39S) which comprises a 16S rRNA and about 50 distinct proteins.

It localises to the mitochondrion. This Mus musculus (Mouse) protein is Large ribosomal subunit protein bL36m (Mrpl36).